The chain runs to 94 residues: Acylphosphatase (94 aa).

Residues 8–94 (TVHVIVKGKV…EKRYKHFAQL (87 aa)) form the Acylphosphatase-like domain. Active-site residues include Arg23 and Asn41.

Belongs to the acylphosphatase family.

It catalyses the reaction an acyl phosphate + H2O = a carboxylate + phosphate + H(+). This Bordetella parapertussis (strain 12822 / ATCC BAA-587 / NCTC 13253) protein is Acylphosphatase (acyP).